The chain runs to 441 residues: Ribulose bisphosphate carboxylase large chain (441 aa).

N6,N6,N6-trimethyllysine is present on Lys-4. Residues Asn-113 and Thr-163 each contribute to the substrate site. Lys-165 functions as the Proton acceptor in the catalytic mechanism. Lys-167 contributes to the substrate binding site. Positions 191, 193, and 194 each coordinate Mg(2+). Lys-191 carries the N6-carboxylysine modification. His-284 acts as the Proton acceptor in catalysis. Residues Arg-285, His-317, and Ser-369 each contribute to the substrate site.

This sequence belongs to the RuBisCO large chain family. Type I subfamily. Heterohexadecamer of 8 large chains and 8 small chains; disulfide-linked. The disulfide link is formed within the large subunit homodimers. It depends on Mg(2+) as a cofactor. Post-translationally, the disulfide bond which can form in the large chain dimeric partners within the hexadecamer appears to be associated with oxidative stress and protein turnover.

It localises to the plastid. It is found in the chloroplast. The enzyme catalyses 2 (2R)-3-phosphoglycerate + 2 H(+) = D-ribulose 1,5-bisphosphate + CO2 + H2O. The catalysed reaction is D-ribulose 1,5-bisphosphate + O2 = 2-phosphoglycolate + (2R)-3-phosphoglycerate + 2 H(+). RuBisCO catalyzes two reactions: the carboxylation of D-ribulose 1,5-bisphosphate, the primary event in carbon dioxide fixation, as well as the oxidative fragmentation of the pentose substrate in the photorespiration process. Both reactions occur simultaneously and in competition at the same active site. The protein is Ribulose bisphosphate carboxylase large chain of Darlingtonia californica (California pitcher plant).